Reading from the N-terminus, the 260-residue chain is Snake venom serine protease homolog 2 (260 aa).

Positions 1–18 (MVLIRVLANLLVLQLSYA) are cleaved as a signal peptide. Positions 19 to 24 (QKSSEL) are excised as a propeptide. The 227-residue stretch at 25 to 251 (VIGGDECNIN…YTDWIQSIIA (227 aa)) folds into the Peptidase S1 domain. Intrachain disulfides connect Cys-31–Cys-165, Cys-52–Cys-68, Cys-100–Cys-258, Cys-144–Cys-212, Cys-176–Cys-191, and Cys-202–Cys-227. Residue Asn-123 is glycosylated (N-linked (GlcNAc...) asparagine). Asn-253 is a glycosylation site (N-linked (GlcNAc...) asparagine).

Belongs to the peptidase S1 family. Snake venom subfamily. In terms of tissue distribution, expressed by the venom gland.

The protein localises to the secreted. Its function is as follows. Snake venom serine protease homolog that may act in the hemostasis system of the prey. This Macrovipera lebetinus (Levantine viper) protein is Snake venom serine protease homolog 2.